A 461-amino-acid polypeptide reads, in one-letter code: Kynureninase (461 aa).

Residues Leu114, Thr115, Phe142–Asp145, Asp228, His231, and Tyr253 contribute to the pyridoxal 5'-phosphate site. Residue Lys254 is modified to N6-(pyridoxal phosphate)lysine. Positions 288 and 316 each coordinate pyridoxal 5'-phosphate.

This sequence belongs to the kynureninase family. In terms of assembly, homodimer. The cofactor is pyridoxal 5'-phosphate.

It localises to the cytoplasm. The enzyme catalyses L-kynurenine + H2O = anthranilate + L-alanine + H(+). It catalyses the reaction 3-hydroxy-L-kynurenine + H2O = 3-hydroxyanthranilate + L-alanine + H(+). Its pathway is amino-acid degradation; L-kynurenine degradation; L-alanine and anthranilate from L-kynurenine: step 1/1. It functions in the pathway cofactor biosynthesis; NAD(+) biosynthesis; quinolinate from L-kynurenine: step 2/3. Catalyzes the cleavage of L-kynurenine (L-Kyn) and L-3-hydroxykynurenine (L-3OHKyn) into anthranilic acid (AA) and 3-hydroxyanthranilic acid (3-OHAA), respectively. The protein is Kynureninase of Candida albicans (strain SC5314 / ATCC MYA-2876) (Yeast).